The sequence spans 137 residues: Nucleoside diphosphate kinase (137 aa).

The ATP site is built by K9, F57, R85, T91, R102, and N112. The active-site Pros-phosphohistidine intermediate is H115.

Belongs to the NDK family. Homotetramer. Mg(2+) is required as a cofactor.

It is found in the cytoplasm. It carries out the reaction a 2'-deoxyribonucleoside 5'-diphosphate + ATP = a 2'-deoxyribonucleoside 5'-triphosphate + ADP. It catalyses the reaction a ribonucleoside 5'-diphosphate + ATP = a ribonucleoside 5'-triphosphate + ADP. Functionally, major role in the synthesis of nucleoside triphosphates other than ATP. The ATP gamma phosphate is transferred to the NDP beta phosphate via a ping-pong mechanism, using a phosphorylated active-site intermediate. This chain is Nucleoside diphosphate kinase, found in Geobacter sulfurreducens (strain ATCC 51573 / DSM 12127 / PCA).